A 119-amino-acid polypeptide reads, in one-letter code: Large ribosomal subunit protein bL20 (119 aa).

Belongs to the bacterial ribosomal protein bL20 family.

Binds directly to 23S ribosomal RNA and is necessary for the in vitro assembly process of the 50S ribosomal subunit. It is not involved in the protein synthesizing functions of that subunit. The sequence is that of Large ribosomal subunit protein bL20 from Shewanella woodyi (strain ATCC 51908 / MS32).